The primary structure comprises 197 residues: GCN5-related N-acetyltransferase 1, chloroplastic (197 aa).

The transit peptide at 1 to 37 directs the protein to the chloroplast; it reads MFLGGTISTPPASLRLRSTLNPQNAVTQSSSQATFPA. A compositionally biased stretch (polar residues) spans 23–34; the sequence is QNAVTQSSSQAT. Positions 23–46 are disordered; it reads QNAVTQSSSQATFPAAMQRKPPSY. Positions 58 to 195 constitute an N-acetyltransferase domain; that stretch reads FLLRRTTEGL…GMVFIRKQRN (138 aa). Acetyl-CoA contacts are provided by residues 129 to 131, 137 to 142, 165 to 167, and Y172; these read VVV, SCGLGK, and EPR. Y172 serves as the catalytic Proton donor.

This sequence belongs to the acetyltransferase family. GNAT subfamily. Oligomer. Post-translationally, autoacetylated. As to expression, expressed in green tissues. Accumulates mainly in flowers and young leaves, and, to a lower extent, in stems and mature leaves, but barely in roots.

The protein localises to the plastid. The protein resides in the chloroplast. The enzyme catalyses an N-terminal L-alpha-aminoacyl-[protein] + acetyl-CoA = N-terminal N(alpha)-acetyl-L-alpha-aminoacyl-[protein] + CoA + H(+). It catalyses the reaction L-lysyl-[protein] + acetyl-CoA = N(6)-acetyl-L-lysyl-[protein] + CoA + H(+). The catalysed reaction is 5-methoxytryptamine + acetyl-CoA = melatonin + CoA + H(+). It carries out the reaction serotonin + acetyl-CoA = N-acetylserotonin + CoA + H(+). With respect to regulation, inhibited by 5-methoxytryptamine in vitro. Its function is as follows. Protein acetyltransferase with dual specificity triggering both N-alpha-acetylation (NTA) and epsilon-lysine acetylation (KA), possibly with a low efficiency or toward specific plastid substrates. Involved in melatonin biosynthesis by catalyzing the formation of N-acetylserotonin (NAS) from serotonin and of melatonin (N-acetyl-5-methoxytryptamine) from 5-methoxytryptamine (5-MT). The protein is GCN5-related N-acetyltransferase 1, chloroplastic of Arabidopsis thaliana (Mouse-ear cress).